The following is a 276-amino-acid chain: Large ribosomal subunit protein uL2 (276 aa).

Disordered stretches follow at residues 30-57 and 219-276; these read EKSLTEKLSKKGGRNNQGRLTVRHQGGG and TVRG…RSKK.

The protein belongs to the universal ribosomal protein uL2 family. Part of the 50S ribosomal subunit. Forms a bridge to the 30S subunit in the 70S ribosome.

In terms of biological role, one of the primary rRNA binding proteins. Required for association of the 30S and 50S subunits to form the 70S ribosome, for tRNA binding and peptide bond formation. It has been suggested to have peptidyltransferase activity; this is somewhat controversial. Makes several contacts with the 16S rRNA in the 70S ribosome. This is Large ribosomal subunit protein uL2 from Exiguobacterium sibiricum (strain DSM 17290 / CCUG 55495 / CIP 109462 / JCM 13490 / 255-15).